Reading from the N-terminus, the 372-residue chain is Lectin/endochitinase 1 (372 aa).

The N-terminal stretch at 1–23 (MMMRFLSAVVIMSSAMAVGLVSA) is a signal peptide. Gln24 is a substrate binding site. The residue at position 24 (Gln24) is a Pyrrolidone carboxylic acid. Chitin-binding type-1 domains lie at 24–64 (QRCG…KCWS) and 69–111 (DHRC…RCSS). 4 disulfide bridges follow: Cys26-Cys41, Cys35-Cys47, Cys40-Cys54, and Cys58-Cys62. 42–53 (SIWGWCGDSEPY) is a binding site for substrate. His70 lines the Zn(2+) pocket. Disulfide bonds link Cys72-Cys87, Cys81-Cys93, Cys86-Cys100, and Cys105-Cys109. Residue His90 participates in Zn(2+) binding. The tract at residues 113 to 128 (VRGPRVALSGNSTANS) is spacer. Asn123 carries N-linked (GlcNAc...) asparagine glycosylation. The tract at residues 129 to 372 (IGNVVVTEPL…FQRIQMRVAA (244 aa)) is chitinase.

As to quaternary structure, monomer and homodimer. Zinc favors dimerization. Active in the monomeric form but probably inactive in the dimeric form. The interaction with glycans on the mammalian TCR and MHC molecules of the T-cell and antigen-presenting cell, respectively, is inhibited by oligomers of GlcNAc. In terms of processing, proteolytically processed to yield a very small protein (8.5 kDa, 86 AA) containing only the two chitin-binding domains. In terms of tissue distribution, rhizomes and inflorescence with immature seeds.

The catalysed reaction is Random endo-hydrolysis of N-acetyl-beta-D-glucosaminide (1-&gt;4)-beta-linkages in chitin and chitodextrins.. Functions both as a chitinase and as a N-acetyl-D-glucosamine binding lectin. Inhibits the growth of several phytopathogenic chitin-containing fungi. Also possesses insecticidal activity and superantigenic properties. This is Lectin/endochitinase 1 (UDA1) from Urtica dioica (Great nettle).